Consider the following 456-residue polypeptide: ACT domain-containing protein ACR5 (456 aa).

ACT domains follow at residues 39-115 (VIKV…FSPS), 130-207 (VVEL…SSGR), 271-347 (IVMI…VSEG), and 349-432 (KLEL…PSPQ).

Expressed in stems and siliques.

Functionally, may bind amino acids. This Arabidopsis thaliana (Mouse-ear cress) protein is ACT domain-containing protein ACR5.